The chain runs to 549 residues: Glucose-6-phosphate isomerase (549 aa).

The active-site Proton donor is the E353. Residues H384 and K510 contribute to the active site.

Belongs to the GPI family.

It is found in the cytoplasm. The catalysed reaction is alpha-D-glucose 6-phosphate = beta-D-fructose 6-phosphate. It participates in carbohydrate biosynthesis; gluconeogenesis. The protein operates within carbohydrate degradation; glycolysis; D-glyceraldehyde 3-phosphate and glycerone phosphate from D-glucose: step 2/4. Functionally, catalyzes the reversible isomerization of glucose-6-phosphate to fructose-6-phosphate. In Mycolicibacterium smegmatis (strain ATCC 700084 / mc(2)155) (Mycobacterium smegmatis), this protein is Glucose-6-phosphate isomerase.